The primary structure comprises 973 residues: MKTSIRKFLISTTLAPCFASTAFTVEVIMPSENFDGSSGKIFPYTTLSDPRGTLCIFSGDLYIANLDNAISRTSSSCFSNRAGALQILGKGGVFSFLNIRSSADGAAISSVITQNPELCPLSFSGFSQMIFDNCESLTSDTSASNVIPHASAIYATTPMLFTNNDSILFQYNRSAGFGAAIRGTSITIENTKKSLLFNGNGSISNGGALTGSAAINLINNSAPVIFSTNATGIYGGAIYLTGGSMLTSGNLSGVLFVNNSSRSGGAIYANGNVTFSNNSDLTFQNNTASPQNSLPAPTPPPTPPAVTPLLGYGGAIFCTPPATPPPTGVSLTISGENSVTFLENIASEQGGALYGKKISIDSNKSTIFLGNTAGKGGAIAIPESGELSLSANQGDILFNKNLSITSGTPTRNSIHFGKDAKFATLGATQGYTLYFYDPITSDDLSAASAAATVVVNPKASADGAYSGTIVFSGETLTATEAATPANATSTLNQKLELEGGTLALRNGATLNVHNFTQDEKSVVIMDAGTTLATTNGANNTDGAITLNKLVINLDSLDGTKAAVVNVQSTNGALTISGTLGLVKNSQDCCDNHGMFNKDLQQVPILELKATSNTVTTTDFSLGTNGYQQSPYGYQGTWEFTIDTTTHTVTGNWKKTGYLPHPERLAPLIPNSLWANVIDLRAVSQASAADGEDVPGKQLSITGITNFFHANHTGDARSYRHMGGGYLINTYTRITPDAALSLGFGQLFTKSKDYLVGHGHSNVYFATVYSNITKSLFGSSRFFSGGTSRVTYSRSNEKVKTSYTKLPKGRCSWSNNCWLGELEGNLPITLSSRILNLKQIIPFVKAEVAYATHGGIQENTPEGRIFGHGHLLNVAVPVGVRFGKNSHNRPDFYTIIVAYAPDVYRHNPDCDTTLPINGATWTSIGNNLTRSTLLVQASSHTSVNDVLEIFGHCGCDIRRTSRQYTLDIGSKLRF.

A signal peptide spans 1-24; that stretch reads MKTSIRKFLISTTLAPCFASTAFT. Polar residues predominate over residues 284-293; that stretch reads QNNTASPQNS. Residues 284-303 are disordered; sequence QNNTASPQNSLPAPTPPPTP. One can recognise an Autotransporter domain in the interval 691–973; that stretch reads EDVPGKQLSI…TLDIGSKLRF (283 aa).

Belongs to the PMP outer membrane protein family.

The protein localises to the secreted. Its subcellular location is the cell wall. It localises to the cell outer membrane. This Chlamydia pneumoniae (Chlamydophila pneumoniae) protein is Probable outer membrane protein pmp13 (pmp13).